The primary structure comprises 152 residues: MFRGANAINLDVKGRVTIPTKYRQSLLDDCQGQLVCTIDTQQPCLLLYPLPEWEEIELKLSRLSSMNPHERRLQRLLLGYATEGEMDKSGRFLLTAPLREHAHLDKQIMLVGQLNKFEIWDHSVWQQQIQQDVATEQEAAFELTERLQDFSL.

SpoVT-AbrB domains are found at residues 5 to 52 (ANAI…PLPE) and 81 to 124 (ATEG…DHSV).

It belongs to the MraZ family. In terms of assembly, forms oligomers.

It localises to the cytoplasm. The protein resides in the nucleoid. The protein is Transcriptional regulator MraZ of Pseudoalteromonas atlantica (strain T6c / ATCC BAA-1087).